Consider the following 409-residue polypeptide: Sex-determination protein fem-3 (409 aa).

Component of a complex containing fem-1, fem-2 and fem-3. Interacts with fem-1 and fem-2 (via N-terminus). Part of a E3 ubiquitin-protein ligase complex, at least composed of cul-2, elc-1, tra-1, fem-1, fem-2 and fem-3; mediates the ubiquitination and subsequent proteasomal degradation of tra-1. Interacts with sel-10. Interacts with tra-2.

Its function is as follows. Required for male development. In XO (male) animals, fem-3 directs male differentiation in all tissues. In XX (hermaphrodite animals), it specifies the first 80 or so germ cells to be sperm. Negatively regulates male development when bound to tra-2. This is Sex-determination protein fem-3 from Caenorhabditis briggsae.